A 565-amino-acid chain; its full sequence is uncharacterized protein (565 aa).

13 consecutive transmembrane segments (helical) span residues 8 to 28, 43 to 63, 95 to 115, 137 to 157, 167 to 187, 227 to 247, 268 to 288, 314 to 334, 367 to 387, 424 to 444, 460 to 480, 482 to 502, and 516 to 536; these read ISFIAAMLIVIGSSIGAGIFF, LAIFNWLVASVAVIAMALALI, MTYLYLPLTFFFMPLYFICSI, WLIWLALALIITTYFLTIPPL, MVVSAVKFIPLVFVPIIGFIV, FTGIGAGMGSFISIAAIFFAY, WALFLGLLITTLFYLILAVAL, IVFGVVNLMIGIGVLGIINGF, VVGVIYCLVLSLTVQVLFTVI, ATWTSLFTFAFIACAIFGAIV, FLPAAWIAVVVNCISVFVTII, PFINLFLLFGYDETVAHTVLG, and VMLIVVLVFFAIISFLPVYVE.

To M.pneumoniae MPN_095 and MPN_096.

Its subcellular location is the cell membrane. This is an uncharacterized protein from Mycoplasma pneumoniae (strain ATCC 29342 / M129 / Subtype 1) (Mycoplasmoides pneumoniae).